We begin with the raw amino-acid sequence, 179 residues long: Ribosome-recycling factor (179 aa).

This sequence belongs to the RRF family.

The protein localises to the cytoplasm. Its function is as follows. Responsible for the release of ribosomes from messenger RNA at the termination of protein biosynthesis. May increase the efficiency of translation by recycling ribosomes from one round of translation to another. This is Ribosome-recycling factor from Chlamydia trachomatis serovar D (strain ATCC VR-885 / DSM 19411 / UW-3/Cx).